A 275-amino-acid polypeptide reads, in one-letter code: Elongation factor Ts (275 aa).

The involved in Mg(2+) ion dislocation from EF-Tu stretch occupies residues 76–79 (TDFV).

The protein belongs to the EF-Ts family.

The protein localises to the cytoplasm. Associates with the EF-Tu.GDP complex and induces the exchange of GDP to GTP. It remains bound to the aminoacyl-tRNA.EF-Tu.GTP complex up to the GTP hydrolysis stage on the ribosome. This Salinispora tropica (strain ATCC BAA-916 / DSM 44818 / JCM 13857 / NBRC 105044 / CNB-440) protein is Elongation factor Ts.